Here is a 320-residue protein sequence, read N- to C-terminus: MSVIDLLKQRVQSAGKKPVIIFPEGWSPTVMEAVNQLQQAGILTPPVIFRTRSEVPAGFNTAIKHYVIEEMDLTKYANFVYEKRKHKGMEMREAQKFVRDASSLAATLVALNEVDGEVCGKEYATKDTLRPALQLLGTGNFVSSVFIMEKNEERLYFTDCAFAVYPSPQELAVVAENTFKFAQSMGEPELKMVFLSYSTLGSGKGEAVDKVVSATQIFLEKHPELKANVCGELQFDSAFVEKVRKQKAPNLTWNGSANIYVFPNLDAGNIGYKIAQRLGGYEAIGPIVLGLARPFNDLSRGASVSDVFNVGIITAAQTLK.

Belongs to the phosphate acetyltransferase and butyryltransferase family.

The protein localises to the cytoplasm. The enzyme catalyses acetyl-CoA + phosphate = acetyl phosphate + CoA. Its pathway is metabolic intermediate biosynthesis; acetyl-CoA biosynthesis; acetyl-CoA from acetate: step 2/2. The chain is Phosphate acetyltransferase (pta) from Mycoplasma pneumoniae (strain ATCC 29342 / M129 / Subtype 1) (Mycoplasmoides pneumoniae).